Reading from the N-terminus, the 173-residue chain is Small ribosomal subunit protein uS5 (173 aa).

Residues 17–80 form the S5 DRBM domain; sequence WQERVIQIRR…ADGKKQLIDV (64 aa).

Belongs to the universal ribosomal protein uS5 family. As to quaternary structure, part of the 30S ribosomal subunit. Contacts proteins S4 and S8.

In terms of biological role, with S4 and S12 plays an important role in translational accuracy. Located at the back of the 30S subunit body where it stabilizes the conformation of the head with respect to the body. The chain is Small ribosomal subunit protein uS5 from Crocosphaera subtropica (strain ATCC 51142 / BH68) (Cyanothece sp. (strain ATCC 51142)).